Consider the following 239-residue polypeptide: tRNA (guanine-N(7)-)-methyltransferase (239 aa).

Positions 1–13 (MEAEVQQGQQSPE) are enriched in polar residues. The tract at residues 1–30 (MEAEVQQGQQSPEGQLEKRPPSPPWAGIPL) is disordered. S-adenosyl-L-methionine-binding residues include D72, E97, N124, and D147. D147 is a catalytic residue. K151 and D183 together coordinate substrate.

The protein belongs to the class I-like SAM-binding methyltransferase superfamily. TrmB family.

It carries out the reaction guanosine(46) in tRNA + S-adenosyl-L-methionine = N(7)-methylguanosine(46) in tRNA + S-adenosyl-L-homocysteine. The protein operates within tRNA modification; N(7)-methylguanine-tRNA biosynthesis. In terms of biological role, catalyzes the formation of N(7)-methylguanine at position 46 (m7G46) in tRNA. The sequence is that of tRNA (guanine-N(7)-)-methyltransferase from Synechococcus sp. (strain JA-2-3B'a(2-13)) (Cyanobacteria bacterium Yellowstone B-Prime).